Consider the following 255-residue polypeptide: tRNA (guanine-N(7)-)-methyltransferase (255 aa).

A disordered region spans residues 1-29 (MMHDDPNEAGLPPDDAALPDEAADGADEV). Over residues 17 to 27 (ALPDEAADGAD) the composition is skewed to acidic residues. Residues Glu86, Glu111, Asp138, and Asp161 each coordinate S-adenosyl-L-methionine. The active site involves Asp161. Substrate is bound by residues Lys165, Asp197, and 232 to 235 (TKFE).

It belongs to the class I-like SAM-binding methyltransferase superfamily. TrmB family.

The catalysed reaction is guanosine(46) in tRNA + S-adenosyl-L-methionine = N(7)-methylguanosine(46) in tRNA + S-adenosyl-L-homocysteine. It participates in tRNA modification; N(7)-methylguanine-tRNA biosynthesis. Its function is as follows. Catalyzes the formation of N(7)-methylguanine at position 46 (m7G46) in tRNA. This chain is tRNA (guanine-N(7)-)-methyltransferase, found in Burkholderia ambifaria (strain ATCC BAA-244 / DSM 16087 / CCUG 44356 / LMG 19182 / AMMD) (Burkholderia cepacia (strain AMMD)).